An 83-amino-acid chain; its full sequence is Erabutoxin b (83 aa).

The signal sequence occupies residues 1–21 (MKTLLLTLVVVTIVCLDLGYT). A loop I region spans residues 24-38 (CFNHQSSQPQTTKTC). 4 cysteine pairs are disulfide-bonded: Cys24-Cys45, Cys38-Cys62, Cys64-Cys75, and Cys76-Cys81. Positions 39 to 44 (SPGESS) are stretch between loop I and loop II. A loop II region spans residues 45–62 (CYHKQWSDFRGTIIERGC). The loop III stretch occupies residues 64-75 (CPTVKPGIKLSC).

Belongs to the three-finger toxin family. Short-chain subfamily. Type I alpha-neurotoxin sub-subfamily. In terms of tissue distribution, expressed by the venom gland.

The protein localises to the secreted. Functionally, binds with high affinity to muscular nicotinic acetylcholine receptors (nAChRs) (tested on Torpedo marmorata, Kd=0.07 nM), and with low affinity to neuronal alpha-7/CHRNA7 nAChRs (tested on chimeric alpha-7/CHRNA7, Kd=22 uM) and inhibit acetylcholine from binding to the receptor, thereby impairing neuromuscular transmission. Produces peripheral paralysis by blocking neuromuscular transmission at the postsynaptic site. This Laticauda semifasciata (Black-banded sea krait) protein is Erabutoxin b.